Reading from the N-terminus, the 227-residue chain is uncharacterized protein (227 aa).

A run of 5 helical transmembrane segments spans residues 27–47 (AVLPGILIIVFIETGLLFPLL), 63–83 (PAPPVTIGVLAPCVALVAVLG), 126–146 (TIILARFVPIARTFVPVIAGV), 153–173 (VFLGFDIVGGVAWGAGVTLAG), and 186–206 (FQLIILAIVFVSLLPALVSAA).

The protein belongs to the DedA family.

It localises to the cell membrane. This is an uncharacterized protein from Mycobacterium tuberculosis (strain CDC 1551 / Oshkosh).